The sequence spans 421 residues: UDP-N-acetylglucosamine 1-carboxyvinyltransferase (421 aa).

A phosphoenolpyruvate-binding site is contributed by 22-23 (KN). Arg-93 serves as a coordination point for UDP-N-acetyl-alpha-D-glucosamine. Catalysis depends on Cys-117, which acts as the Proton donor. At Cys-117 the chain carries 2-(S-cysteinyl)pyruvic acid O-phosphothioketal. Residues 122–126 (RPVDL), Asp-308, and Ile-330 contribute to the UDP-N-acetyl-alpha-D-glucosamine site.

The protein belongs to the EPSP synthase family. MurA subfamily.

It localises to the cytoplasm. It catalyses the reaction phosphoenolpyruvate + UDP-N-acetyl-alpha-D-glucosamine = UDP-N-acetyl-3-O-(1-carboxyvinyl)-alpha-D-glucosamine + phosphate. It participates in cell wall biogenesis; peptidoglycan biosynthesis. Functionally, cell wall formation. Adds enolpyruvyl to UDP-N-acetylglucosamine. The protein is UDP-N-acetylglucosamine 1-carboxyvinyltransferase of Pseudomonas savastanoi pv. phaseolicola (strain 1448A / Race 6) (Pseudomonas syringae pv. phaseolicola (strain 1448A / Race 6)).